The chain runs to 261 residues: 1-(5-phosphoribosyl)-5-[(5-phosphoribosylamino)methylideneamino] imidazole-4-carboxamide isomerase (261 aa).

Residue D8 is the Proton acceptor of the active site. D139 serves as the catalytic Proton donor.

This sequence belongs to the HisA/HisF family.

The protein localises to the cytoplasm. The enzyme catalyses 1-(5-phospho-beta-D-ribosyl)-5-[(5-phospho-beta-D-ribosylamino)methylideneamino]imidazole-4-carboxamide = 5-[(5-phospho-1-deoxy-D-ribulos-1-ylimino)methylamino]-1-(5-phospho-beta-D-ribosyl)imidazole-4-carboxamide. It functions in the pathway amino-acid biosynthesis; L-histidine biosynthesis; L-histidine from 5-phospho-alpha-D-ribose 1-diphosphate: step 4/9. This is 1-(5-phosphoribosyl)-5-[(5-phosphoribosylamino)methylideneamino] imidazole-4-carboxamide isomerase from Janthinobacterium sp. (strain Marseille) (Minibacterium massiliensis).